A 151-amino-acid chain; its full sequence is SsrA-binding protein (151 aa).

Residues 131–151 (KRESIKEKDWKRDQSRLIRQK) are disordered.

It belongs to the SmpB family.

Its subcellular location is the cytoplasm. In terms of biological role, required for rescue of stalled ribosomes mediated by trans-translation. Binds to transfer-messenger RNA (tmRNA), required for stable association of tmRNA with ribosomes. tmRNA and SmpB together mimic tRNA shape, replacing the anticodon stem-loop with SmpB. tmRNA is encoded by the ssrA gene; the 2 termini fold to resemble tRNA(Ala) and it encodes a 'tag peptide', a short internal open reading frame. During trans-translation Ala-aminoacylated tmRNA acts like a tRNA, entering the A-site of stalled ribosomes, displacing the stalled mRNA. The ribosome then switches to translate the ORF on the tmRNA; the nascent peptide is terminated with the 'tag peptide' encoded by the tmRNA and targeted for degradation. The ribosome is freed to recommence translation, which seems to be the essential function of trans-translation. The sequence is that of SsrA-binding protein from Rickettsia bellii (strain OSU 85-389).